The following is a 249-amino-acid chain: Diaminopimelate epimerase (249 aa).

Substrate is bound by residues Asn-11 and Asn-60. The active-site Proton donor is the Cys-69. Residues Gly-70–Asn-71, Asn-164, and Glu-182–Arg-183 each bind substrate. Cys-192 functions as the Proton acceptor in the catalytic mechanism. A substrate-binding site is contributed by Gly-193–Thr-194.

Belongs to the diaminopimelate epimerase family. In terms of assembly, homodimer.

The protein localises to the cytoplasm. The enzyme catalyses (2S,6S)-2,6-diaminopimelate = meso-2,6-diaminopimelate. It participates in amino-acid biosynthesis; L-lysine biosynthesis via DAP pathway; DL-2,6-diaminopimelate from LL-2,6-diaminopimelate: step 1/1. In terms of biological role, catalyzes the stereoinversion of LL-2,6-diaminopimelate (L,L-DAP) to meso-diaminopimelate (meso-DAP), a precursor of L-lysine and an essential component of the bacterial peptidoglycan. The protein is Diaminopimelate epimerase of Campylobacter jejuni subsp. jejuni serotype O:2 (strain ATCC 700819 / NCTC 11168).